The chain runs to 404 residues: Argininosuccinate synthase (404 aa).

ATP contacts are provided by residues 12–20 (AYSGGLDTS) and alanine 39. L-citrulline contacts are provided by tyrosine 91 and serine 96. Residue glycine 121 coordinates ATP. Residues threonine 123, asparagine 127, and aspartate 128 each contribute to the L-aspartate site. Residue asparagine 127 coordinates L-citrulline. The L-citrulline site is built by arginine 131, serine 180, serine 189, glutamate 265, and tyrosine 277.

This sequence belongs to the argininosuccinate synthase family. Type 1 subfamily. In terms of assembly, homotetramer.

The protein resides in the cytoplasm. The catalysed reaction is L-citrulline + L-aspartate + ATP = 2-(N(omega)-L-arginino)succinate + AMP + diphosphate + H(+). It functions in the pathway amino-acid biosynthesis; L-arginine biosynthesis; L-arginine from L-ornithine and carbamoyl phosphate: step 2/3. This is Argininosuccinate synthase from Vibrio campbellii (strain ATCC BAA-1116).